A 71-amino-acid chain; its full sequence is Small ribosomal subunit protein bS21 (71 aa).

A disordered region spans residues 48 to 71; sequence ENATLAKRHAKRNARENARNTRLY. Over residues 60–71 the composition is skewed to basic and acidic residues; sequence NARENARNTRLY.

This sequence belongs to the bacterial ribosomal protein bS21 family.

The sequence is that of Small ribosomal subunit protein bS21 from Haemophilus influenzae (strain 86-028NP).